The following is a 1331-amino-acid chain: DNA-directed RNA polymerase subunit beta' (1331 aa).

Zn(2+) contacts are provided by Cys220, Cys293, Cys300, and Cys303. Disordered regions lie at residues 1236–1257 (DFVDEGTSRSPNGYSNVVTNDN) and 1294–1331 (ISGDELISDDTPIPSDVQGKAPVIDDDAMIDDNWMKDQ). Polar residues predominate over residues 1243–1257 (SRSPNGYSNVVTNDN).

The protein belongs to the RNA polymerase beta' chain family. RpoC2 subfamily. In terms of assembly, in cyanobacteria the RNAP catalytic core is composed of 2 alpha, 1 beta, 1 beta', 1 gamma and 1 omega subunit. When a sigma factor is associated with the core the holoenzyme is formed, which can initiate transcription. Zn(2+) is required as a cofactor.

It carries out the reaction RNA(n) + a ribonucleoside 5'-triphosphate = RNA(n+1) + diphosphate. Its function is as follows. DNA-dependent RNA polymerase catalyzes the transcription of DNA into RNA using the four ribonucleoside triphosphates as substrates. This is DNA-directed RNA polymerase subunit beta' from Picosynechococcus sp. (strain ATCC 27264 / PCC 7002 / PR-6) (Agmenellum quadruplicatum).